The primary structure comprises 66 residues: KEGYIVNHSTGCKYECYKLGDNDYCLRECKLQYGKGAGGYCYAFGCWCTHLYEQAVVWPLPKKTCN.

Residues 1–66 form the LCN-type CS-alpha/beta domain; that stretch reads KEGYIVNHST…VWPLPKKTCN (66 aa). Cystine bridges form between cysteine 12-cysteine 65, cysteine 16-cysteine 41, cysteine 25-cysteine 46, and cysteine 29-cysteine 48.

In terms of tissue distribution, expressed by the venom gland.

Its subcellular location is the secreted. Is susceptible to be slightly neutralized by human antibodies scFvs 10FG2. Its function is as follows. Beta toxins bind voltage-independently at site-4 of sodium channels (Nav) and reduces peak current and shifts the voltage of activation toward more negative potentials thereby affecting sodium channel activation and promoting spontaneous and repetitive firing. This toxin is slightly toxic to mice. In Centruroides villegasi (Scorpion), this protein is Beta-mammal toxin Cv2.